Here is a 361-residue protein sequence, read N- to C-terminus: Feruloyl CoA ortho-hydroxylase 1 (361 aa).

The region spanning 204 to 312 (TKESLFMGSI…RISVPIFVNP (109 aa)) is the Fe2OG dioxygenase domain. Y220 is a binding site for 2-oxoglutarate. Residues H235, D237, and H293 each contribute to the Fe cation site. R303 and S305 together coordinate 2-oxoglutarate.

This sequence belongs to the iron/ascorbate-dependent oxidoreductase family. The cofactor is L-ascorbate. Requires Fe(2+) as cofactor. Highly expressed in roots, especially in the cortex.

The enzyme catalyses (E)-feruloyl-CoA + 2-oxoglutarate + O2 = (E)-6-hydroxyferuloyl-CoA + succinate + CO2. It catalyses the reaction (E)-6-hydroxyferuloyl-CoA = scopoletin + CoA. The protein operates within phenylpropanoid metabolism. 2-oxoglutarate (OG)- and Fe(II)-dependent dioxygenase (2OGD) involved in scopoletin biosynthesis. Converts feruloyl CoA into 6'-hydroxyferuloyl CoA but has no activity with ferulic acid, feruloylquinic acid, caffeic acid, caffeoyl CoA, p-coumaric acid, cinnamic acid, cinnamoyl CoA or benzoyl CoA. Required for the production and secretion of compounds (e.g. fluorescent coumarins) that facilitate the mobilization and uptake of iron from sources with low bioavailability or in high pH-induced iron deficiency conditions. Involved in the pathway of sideretin biosynthesis from feruloyl CoA, a redox-active catecholic metabolite exuded by roots in response to iron deficiency in order to facilitate the uptake of iron; this pathway consists in the successive conversion from feruloyl CoA to scopoletin, from scopoletin to fraxetin and from fraxetin to sideretin. Catalyzes the biosynthesis of scopoletin from feruloyl CoA. The protein is Feruloyl CoA ortho-hydroxylase 1 of Arabidopsis thaliana (Mouse-ear cress).